A 358-amino-acid chain; its full sequence is Phospho-N-acetylmuramoyl-pentapeptide-transferase (358 aa).

The next 10 membrane-spanning stretches (helical) occupy residues 24 to 44 (FRSI…GPWV), 73 to 93 (TMGG…WADL), 95 to 115 (NVFI…GFVD), 134 to 154 (MFWQ…LPGF), 169 to 189 (ELGI…SNAV), 197 to 217 (GLAI…CYIA), 233 to 253 (GAGE…GFLW), 261 to 281 (VFMG…LAVL), 286 to 306 (ILLV…IFQV), and 335 to 355 (KIIV…ISTL).

The protein belongs to the glycosyltransferase 4 family. MraY subfamily. The cofactor is Mg(2+).

It is found in the cell inner membrane. The enzyme catalyses UDP-N-acetyl-alpha-D-muramoyl-L-alanyl-gamma-D-glutamyl-meso-2,6-diaminopimeloyl-D-alanyl-D-alanine + di-trans,octa-cis-undecaprenyl phosphate = di-trans,octa-cis-undecaprenyl diphospho-N-acetyl-alpha-D-muramoyl-L-alanyl-D-glutamyl-meso-2,6-diaminopimeloyl-D-alanyl-D-alanine + UMP. It participates in cell wall biogenesis; peptidoglycan biosynthesis. Catalyzes the initial step of the lipid cycle reactions in the biosynthesis of the cell wall peptidoglycan: transfers peptidoglycan precursor phospho-MurNAc-pentapeptide from UDP-MurNAc-pentapeptide onto the lipid carrier undecaprenyl phosphate, yielding undecaprenyl-pyrophosphoryl-MurNAc-pentapeptide, known as lipid I. In Citrifermentans bemidjiense (strain ATCC BAA-1014 / DSM 16622 / JCM 12645 / Bem) (Geobacter bemidjiensis), this protein is Phospho-N-acetylmuramoyl-pentapeptide-transferase.